The following is a 183-amino-acid chain: Large ribosomal subunit protein bL25 (183 aa).

The protein belongs to the bacterial ribosomal protein bL25 family. CTC subfamily. As to quaternary structure, part of the 50S ribosomal subunit; part of the 5S rRNA/L5/L18/L25 subcomplex. Contacts the 5S rRNA. Binds to the 5S rRNA independently of L5 and L18.

In terms of biological role, this is one of the proteins that binds to the 5S RNA in the ribosome where it forms part of the central protuberance. The protein is Large ribosomal subunit protein bL25 of Desulfotalea psychrophila (strain LSv54 / DSM 12343).